The chain runs to 366 residues: 1-aminocyclopropane-1-carboxylate oxidase homolog 12 (366 aa).

The region spanning 215-314 (KTLLMICHYY…RISVASFFSS (100 aa)) is the Fe2OG dioxygenase domain. Fe cation is bound by residues His-239, Asp-241, and His-295. Arg-305 is a binding site for 2-oxoglutarate.

The protein belongs to the iron/ascorbate-dependent oxidoreductase family. It depends on Fe(2+) as a cofactor.

In Arabidopsis thaliana (Mouse-ear cress), this protein is 1-aminocyclopropane-1-carboxylate oxidase homolog 12.